Here is a 361-residue protein sequence, read N- to C-terminus: Phosphoserine aminotransferase (361 aa).

Residue Arg43 coordinates L-glutamate. Residues 77 to 78 (AS), Trp103, Thr153, Asp173, and Gln196 contribute to the pyridoxal 5'-phosphate site. Lys197 is modified (N6-(pyridoxal phosphate)lysine). 238 to 239 (NT) provides a ligand contact to pyridoxal 5'-phosphate.

Belongs to the class-V pyridoxal-phosphate-dependent aminotransferase family. SerC subfamily. Homodimer. It depends on pyridoxal 5'-phosphate as a cofactor.

It is found in the cytoplasm. The catalysed reaction is O-phospho-L-serine + 2-oxoglutarate = 3-phosphooxypyruvate + L-glutamate. The enzyme catalyses 4-(phosphooxy)-L-threonine + 2-oxoglutarate = (R)-3-hydroxy-2-oxo-4-phosphooxybutanoate + L-glutamate. The protein operates within amino-acid biosynthesis; L-serine biosynthesis; L-serine from 3-phospho-D-glycerate: step 2/3. It functions in the pathway cofactor biosynthesis; pyridoxine 5'-phosphate biosynthesis; pyridoxine 5'-phosphate from D-erythrose 4-phosphate: step 3/5. Its function is as follows. Catalyzes the reversible conversion of 3-phosphohydroxypyruvate to phosphoserine and of 3-hydroxy-2-oxo-4-phosphonooxybutanoate to phosphohydroxythreonine. The protein is Phosphoserine aminotransferase of Azotobacter vinelandii (strain DJ / ATCC BAA-1303).